Here is a 173-residue protein sequence, read N- to C-terminus: Crossover junction endodeoxyribonuclease RuvC (173 aa).

Catalysis depends on residues D8, E67, and D139. Mg(2+) contacts are provided by D8, E67, and D139.

This sequence belongs to the RuvC family. In terms of assembly, homodimer which binds Holliday junction (HJ) DNA. The HJ becomes 2-fold symmetrical on binding to RuvC with unstacked arms; it has a different conformation from HJ DNA in complex with RuvA. In the full resolvosome a probable DNA-RuvA(4)-RuvB(12)-RuvC(2) complex forms which resolves the HJ. Mg(2+) serves as cofactor.

Its subcellular location is the cytoplasm. It catalyses the reaction Endonucleolytic cleavage at a junction such as a reciprocal single-stranded crossover between two homologous DNA duplexes (Holliday junction).. In terms of biological role, the RuvA-RuvB-RuvC complex processes Holliday junction (HJ) DNA during genetic recombination and DNA repair. Endonuclease that resolves HJ intermediates. Cleaves cruciform DNA by making single-stranded nicks across the HJ at symmetrical positions within the homologous arms, yielding a 5'-phosphate and a 3'-hydroxyl group; requires a central core of homology in the junction. The consensus cleavage sequence is 5'-(A/T)TT(C/G)-3'. Cleavage occurs on the 3'-side of the TT dinucleotide at the point of strand exchange. HJ branch migration catalyzed by RuvA-RuvB allows RuvC to scan DNA until it finds its consensus sequence, where it cleaves and resolves the cruciform DNA. This Salmonella dublin (strain CT_02021853) protein is Crossover junction endodeoxyribonuclease RuvC.